We begin with the raw amino-acid sequence, 118 residues long: NADH-ubiquinone oxidoreductase chain 3 (118 aa).

Transmembrane regions (helical) follow at residues 9-29 (IYLVISLLVCLIPLGVPFLFA), 62-82 (LVSILFIIFDLEVTFFFPWAV), and 87-107 (IDLFGFWSMMVFLLILTIGFL).

This sequence belongs to the complex I subunit 3 family.

It is found in the mitochondrion membrane. The enzyme catalyses a ubiquinone + NADH + 5 H(+)(in) = a ubiquinol + NAD(+) + 4 H(+)(out). Functionally, core subunit of the mitochondrial membrane respiratory chain NADH dehydrogenase (Complex I) that is believed to belong to the minimal assembly required for catalysis. Complex I functions in the transfer of electrons from NADH to the respiratory chain. The immediate electron acceptor for the enzyme is believed to be ubiquinone. This chain is NADH-ubiquinone oxidoreductase chain 3 (NAD3), found in Pinus sylvestris (Scotch pine).